The following is a 126-amino-acid chain: Anti-adapter protein IraD (126 aa).

Belongs to the GpW/Gp25 family. IraD subfamily. Interacts with RssB.

It localises to the cytoplasm. Inhibits RpoS proteolysis by regulating RssB activity, thereby increasing the stability of the sigma stress factor RpoS during oxidative stress. Its effect on RpoS stability is due to its interaction with RssB, which probably blocks the interaction of RssB with RpoS, and the consequent delivery of the RssB-RpoS complex to the ClpXP protein degradation pathway. The polypeptide is Anti-adapter protein IraD (Salmonella paratyphi A (strain ATCC 9150 / SARB42)).